We begin with the raw amino-acid sequence, 219 residues long: Phosphatidylserine decarboxylase proenzyme (219 aa).

Catalysis depends on Ser188, which acts as the Schiff-base intermediate with substrate; via pyruvic acid. Ser188 is modified (pyruvic acid (Ser); by autocatalysis).

It belongs to the phosphatidylserine decarboxylase family. PSD-A subfamily. In terms of assembly, heterodimer of a large membrane-associated beta subunit and a small pyruvoyl-containing alpha subunit. Pyruvate is required as a cofactor. Is synthesized initially as an inactive proenzyme. Formation of the active enzyme involves a self-maturation process in which the active site pyruvoyl group is generated from an internal serine residue via an autocatalytic post-translational modification. Two non-identical subunits are generated from the proenzyme in this reaction, and the pyruvate is formed at the N-terminus of the alpha chain, which is derived from the carboxyl end of the proenzyme. The post-translation cleavage follows an unusual pathway, termed non-hydrolytic serinolysis, in which the side chain hydroxyl group of the serine supplies its oxygen atom to form the C-terminus of the beta chain, while the remainder of the serine residue undergoes an oxidative deamination to produce ammonia and the pyruvoyl prosthetic group on the alpha chain.

It localises to the cell membrane. It catalyses the reaction a 1,2-diacyl-sn-glycero-3-phospho-L-serine + H(+) = a 1,2-diacyl-sn-glycero-3-phosphoethanolamine + CO2. Its pathway is phospholipid metabolism; phosphatidylethanolamine biosynthesis; phosphatidylethanolamine from CDP-diacylglycerol: step 2/2. Functionally, catalyzes the formation of phosphatidylethanolamine (PtdEtn) from phosphatidylserine (PtdSer). The chain is Phosphatidylserine decarboxylase proenzyme from Geobacter sp. (strain M21).